Consider the following 285-residue polypeptide: 2-dehydro-3-deoxyphosphooctonate aldolase (285 aa).

The protein belongs to the KdsA family.

Its subcellular location is the cytoplasm. It carries out the reaction D-arabinose 5-phosphate + phosphoenolpyruvate + H2O = 3-deoxy-alpha-D-manno-2-octulosonate-8-phosphate + phosphate. The protein operates within carbohydrate biosynthesis; 3-deoxy-D-manno-octulosonate biosynthesis; 3-deoxy-D-manno-octulosonate from D-ribulose 5-phosphate: step 2/3. It functions in the pathway bacterial outer membrane biogenesis; lipopolysaccharide biosynthesis. This is 2-dehydro-3-deoxyphosphooctonate aldolase from Bordetella parapertussis (strain 12822 / ATCC BAA-587 / NCTC 13253).